The chain runs to 156 residues: Small ribosomal subunit protein uS7 (156 aa).

The protein belongs to the universal ribosomal protein uS7 family. In terms of assembly, part of the 30S ribosomal subunit. Contacts proteins S9 and S11.

One of the primary rRNA binding proteins, it binds directly to 16S rRNA where it nucleates assembly of the head domain of the 30S subunit. Is located at the subunit interface close to the decoding center, probably blocks exit of the E-site tRNA. This Shewanella sp. (strain ANA-3) protein is Small ribosomal subunit protein uS7.